A 165-amino-acid chain; its full sequence is 3-isopropylmalate dehydratase small subunit (165 aa).

It belongs to the LeuD family. LeuD type 2 subfamily. Heterodimer of LeuC and LeuD.

It catalyses the reaction (2R,3S)-3-isopropylmalate = (2S)-2-isopropylmalate. It functions in the pathway amino-acid biosynthesis; L-leucine biosynthesis; L-leucine from 3-methyl-2-oxobutanoate: step 2/4. In terms of biological role, catalyzes the isomerization between 2-isopropylmalate and 3-isopropylmalate, via the formation of 2-isopropylmaleate. The chain is 3-isopropylmalate dehydratase small subunit from Saccharolobus islandicus (strain M.14.25 / Kamchatka #1) (Sulfolobus islandicus).